The primary structure comprises 370 residues: Probable trehalose-phosphate phosphatase 6 (370 aa).

The protein belongs to the trehalose phosphatase family. It depends on a divalent metal cation as a cofactor.

The catalysed reaction is alpha,alpha-trehalose 6-phosphate + H2O = alpha,alpha-trehalose + phosphate. Its pathway is glycan biosynthesis; trehalose biosynthesis. In terms of biological role, removes the phosphate from trehalose 6-phosphate to produce free trehalose. Trehalose accumulation in plant may improve abiotic stress tolerance. The protein is Probable trehalose-phosphate phosphatase 6 (TPP6) of Oryza sativa subsp. japonica (Rice).